Consider the following 359-residue polypeptide: 3-dehydroquinate synthase (359 aa).

Residues 71 to 76, 105 to 109, 129 to 130, K142, and K151 contribute to the NAD(+) site; these read DGEAYK, GVIGD, and TT. The Zn(2+) site is built by E184, H247, and H264.

It belongs to the sugar phosphate cyclases superfamily. Dehydroquinate synthase family. It depends on Co(2+) as a cofactor. Requires Zn(2+) as cofactor. NAD(+) serves as cofactor.

Its subcellular location is the cytoplasm. It catalyses the reaction 7-phospho-2-dehydro-3-deoxy-D-arabino-heptonate = 3-dehydroquinate + phosphate. The protein operates within metabolic intermediate biosynthesis; chorismate biosynthesis; chorismate from D-erythrose 4-phosphate and phosphoenolpyruvate: step 2/7. Functionally, catalyzes the conversion of 3-deoxy-D-arabino-heptulosonate 7-phosphate (DAHP) to dehydroquinate (DHQ). The protein is 3-dehydroquinate synthase of Burkholderia multivorans (strain ATCC 17616 / 249).